The chain runs to 201 residues: Peptide deformylase (201 aa).

Residues 1–24 are disordered; it reads MANHFSQLAKKSKTNGNSEKIAKE. Fe cation-binding residues include Cys121 and His163. The active site involves Glu164. His167 is a binding site for Fe cation.

The protein belongs to the polypeptide deformylase family. Fe(2+) is required as a cofactor.

The catalysed reaction is N-terminal N-formyl-L-methionyl-[peptide] + H2O = N-terminal L-methionyl-[peptide] + formate. In terms of biological role, removes the formyl group from the N-terminal Met of newly synthesized proteins. Requires at least a dipeptide for an efficient rate of reaction. N-terminal L-methionine is a prerequisite for activity but the enzyme has broad specificity at other positions. The sequence is that of Peptide deformylase from Prochlorococcus marinus (strain MIT 9312).